The sequence spans 142 residues: Phosphoribosyl-AMP cyclohydrolase (142 aa).

Residue Asp-92 participates in Mg(2+) binding. Cys-93 is a binding site for Zn(2+). Positions 94 and 96 each coordinate Mg(2+). The Zn(2+) site is built by Cys-109 and Cys-116.

This sequence belongs to the PRA-CH family. Homodimer. Mg(2+) serves as cofactor. Requires Zn(2+) as cofactor.

It is found in the cytoplasm. The enzyme catalyses 1-(5-phospho-beta-D-ribosyl)-5'-AMP + H2O = 1-(5-phospho-beta-D-ribosyl)-5-[(5-phospho-beta-D-ribosylamino)methylideneamino]imidazole-4-carboxamide. It participates in amino-acid biosynthesis; L-histidine biosynthesis; L-histidine from 5-phospho-alpha-D-ribose 1-diphosphate: step 3/9. In terms of biological role, catalyzes the hydrolysis of the adenine ring of phosphoribosyl-AMP. The chain is Phosphoribosyl-AMP cyclohydrolase from Alkalilimnicola ehrlichii (strain ATCC BAA-1101 / DSM 17681 / MLHE-1).